Consider the following 391-residue polypeptide: GTPase Obg (391 aa).

The region spanning 1–159 (MKFIDEALIR…RDLLLELMLL (159 aa)) is the Obg domain. An OBG-type G domain is found at 160 to 333 (ADVGMLGLPN…LTRDIMDFIE (174 aa)). Residues 166–173 (GLPNAGKS), 191–195 (FTTLV), 213–216 (DIPG), 283–286 (NKID), and 314–316 (SAA) each bind GTP. 2 residues coordinate Mg(2+): Ser173 and Thr193.

It belongs to the TRAFAC class OBG-HflX-like GTPase superfamily. OBG GTPase family. Monomer. The cofactor is Mg(2+).

It is found in the cytoplasm. An essential GTPase which binds GTP, GDP and possibly (p)ppGpp with moderate affinity, with high nucleotide exchange rates and a fairly low GTP hydrolysis rate. Plays a role in control of the cell cycle, stress response, ribosome biogenesis and in those bacteria that undergo differentiation, in morphogenesis control. This Actinobacillus pleuropneumoniae serotype 5b (strain L20) protein is GTPase Obg.